The sequence spans 836 residues: Phenylalanine--tRNA ligase beta subunit (836 aa).

In terms of domain architecture, tRNA-binding spans 44-160; that stretch reads PETTGPLVIG…EIAEPGTDAR (117 aa). Positions 420–495 constitute a B5 domain; that stretch reads PSMPQIRMKT…RLEGLEDIPT (76 aa). Mg(2+)-binding residues include D473, D479, E482, and E483. Positions 742 to 835 constitute an FDX-ACB domain; the sequence is SAFPVLHQDL…AAELFGATMR (94 aa).

It belongs to the phenylalanyl-tRNA synthetase beta subunit family. Type 1 subfamily. As to quaternary structure, tetramer of two alpha and two beta subunits. It depends on Mg(2+) as a cofactor.

It is found in the cytoplasm. The enzyme catalyses tRNA(Phe) + L-phenylalanine + ATP = L-phenylalanyl-tRNA(Phe) + AMP + diphosphate + H(+). The protein is Phenylalanine--tRNA ligase beta subunit of Corynebacterium diphtheriae (strain ATCC 700971 / NCTC 13129 / Biotype gravis).